A 702-amino-acid chain; its full sequence is Threonine--tRNA ligase (702 aa).

Residues 1–30 (MSAPVHPVPGADGGDPLRPATPGLRSPQVP) form a disordered region. Positions 15–84 (DPLRPATPGL…DVDVEVTPVP (70 aa)) constitute a TGS domain. The tract at residues 279-585 (DHRKLGIELD…LTEHYAGAFP (307 aa)) is catalytic. Zn(2+) is bound by residues C384, H435, and H562.

Belongs to the class-II aminoacyl-tRNA synthetase family. In terms of assembly, homodimer. Zn(2+) serves as cofactor.

It localises to the cytoplasm. It catalyses the reaction tRNA(Thr) + L-threonine + ATP = L-threonyl-tRNA(Thr) + AMP + diphosphate + H(+). Functionally, catalyzes the attachment of threonine to tRNA(Thr) in a two-step reaction: L-threonine is first activated by ATP to form Thr-AMP and then transferred to the acceptor end of tRNA(Thr). Also edits incorrectly charged L-seryl-tRNA(Thr). The protein is Threonine--tRNA ligase of Mycobacterium leprae (strain Br4923).